The sequence spans 296 residues: Probable cell wall protein PGA41 (296 aa).

Residues 1 to 18 (MKFTIVLFTLISVTVAAA) form the signal peptide. The span at 146–212 (IASSTKESSS…ITTISSDSST (67 aa)) shows a compositional bias: low complexity. The interval 146–276 (IASSTKESSS…PNSSQTAPGA (131 aa)) is disordered. Over residues 220–245 (QGGGGNSGNNGSNGDGGNDASGGGGV) the composition is skewed to gly residues. N-linked (GlcNAc...) asparagine glycosylation is found at Asn229 and Asn268. A compositionally biased stretch (low complexity) spans 247 to 274 (NENEQASSPPSSQSSTNSNQPNSSQTAP). The GPI-anchor amidated glycine moiety is linked to residue Gly275. A propeptide spans 276–296 (AANYLSSVSVGTLMILVLGLI) (removed in mature form).

It belongs to the IHD1 family. Post-translationally, the GPI-anchor is attached to the protein in the endoplasmic reticulum and serves to target the protein to the cell surface. There, the glucosamine-inositol phospholipid moiety is cleaved off and the GPI-modified mannoprotein is covalently attached via its lipidless GPI glycan remnant to the 1,6-beta-glucan of the outer cell wall layer.

It localises to the secreted. It is found in the cell wall. Its subcellular location is the membrane. Its function is as follows. Probable GPI-anchored cell wall protein that may be involved in cell wall organization, hyphal growth, as well as in virulence. This chain is Probable cell wall protein PGA41 (PGA41), found in Candida albicans (strain SC5314 / ATCC MYA-2876) (Yeast).